The sequence spans 425 residues: Adenylosuccinate synthetase (425 aa).

GTP contacts are provided by residues 12 to 18 (GDEGKGK) and 40 to 42 (GHT). The Proton acceptor role is filled by Asp13. Mg(2+) is bound by residues Asp13 and Gly40. IMP-binding positions include 13–16 (DEGK), 38–41 (NAGH), Thr127, Arg141, Gln222, Thr237, and Arg301. The active-site Proton donor is His41. 297–303 (AVTGRPR) serves as a coordination point for substrate. Residues Arg303, 329–331 (KID), and 411–413 (SVG) each bind GTP.

Belongs to the adenylosuccinate synthetase family. In terms of assembly, homodimer. Requires Mg(2+) as cofactor.

The protein resides in the cytoplasm. It catalyses the reaction IMP + L-aspartate + GTP = N(6)-(1,2-dicarboxyethyl)-AMP + GDP + phosphate + 2 H(+). It functions in the pathway purine metabolism; AMP biosynthesis via de novo pathway; AMP from IMP: step 1/2. Functionally, plays an important role in the de novo pathway of purine nucleotide biosynthesis. Catalyzes the first committed step in the biosynthesis of AMP from IMP. This chain is Adenylosuccinate synthetase, found in Fusobacterium nucleatum.